The primary structure comprises 509 residues: MVLETLNPLHYNITSLVPDTMPVATVPILILMCFLFLIWNHEETSSIPGPGYCMGIGPLISHGRFLWMGVGNACNYYNKTYGDFVRVWISGEETFIISKSSSVSHVMKHWHYVSRFGSKLGLQCIGMYENGIIFNNNPAHWKEIRPFFTKALSGPGLVRMIAICVESTTEHLDRLQEVTTELGNINALNLMRRIMLDTSNKLFLGVPLDENAIVLKIQNYFDAWQALLLKPDIFFKISWLCKKYKDAVKDLKGAMEILIEQKRQKLSTVEKLDEHMDFASQLIFAQNRGDLTAENVNQCVLEMMIAAPDTLSVTLFFMLILIAEHPTVEEEMMREIETVVGDRDIQSDDMPNLKIVENFIYESMRYQPVVDLIMRKALQDDVIDGYPVKKGTNIILNIGRMHKLEFFPKPNEFSLENFEKNVPSRYFQPFGFGPRSCVGKFIAMVMMKAILVTLLRRCRVQTMKGRGLNNIQKNNDLSMHPIERQPLLEMVFTPRRNANENQGDGMDQH.

Position 437 (Cys437) interacts with heme.

Belongs to the cytochrome P450 family. Heme is required as a cofactor.

It is found in the membrane. The enzyme catalyses testosterone + 3 reduced [NADPH--hemoprotein reductase] + 3 O2 = 17beta-estradiol + formate + 3 oxidized [NADPH--hemoprotein reductase] + 4 H2O + 4 H(+). The catalysed reaction is androst-4-ene-3,17-dione + 3 reduced [NADPH--hemoprotein reductase] + 3 O2 = estrone + formate + 3 oxidized [NADPH--hemoprotein reductase] + 4 H2O + 4 H(+). Its function is as follows. Catalyzes the formation of aromatic C18 estrogens from C19 androgens. In Taeniopygia guttata (Zebra finch), this protein is Aromatase (CYP19A1).